Here is a 54-residue protein sequence, read N- to C-terminus: UPF0235 protein in proC 3'region (54 aa).

Belongs to the UPF0235 family.

In Vibrio alginolyticus, this protein is UPF0235 protein in proC 3'region.